The sequence spans 538 residues: Phosphoenolpyruvate carboxykinase (ATP) (538 aa).

Residues Arg-64, Tyr-205, and Lys-211 each coordinate substrate. ATP contacts are provided by residues Lys-211, His-230, and Gly-246–Thr-254. The Mn(2+) site is built by Lys-211 and His-230. Asp-267 contacts Mn(2+). ATP-binding positions include Glu-295, Arg-331, Arg-447–Ile-448, and Thr-453. Substrate is bound at residue Arg-331.

The protein belongs to the phosphoenolpyruvate carboxykinase (ATP) family. As to quaternary structure, monomer. The cofactor is Mn(2+).

Its subcellular location is the cytoplasm. The enzyme catalyses oxaloacetate + ATP = phosphoenolpyruvate + ADP + CO2. It functions in the pathway carbohydrate biosynthesis; gluconeogenesis. Its function is as follows. Involved in the gluconeogenesis. Catalyzes the conversion of oxaloacetate (OAA) to phosphoenolpyruvate (PEP) through direct phosphoryl transfer between the nucleoside triphosphate and OAA. This chain is Phosphoenolpyruvate carboxykinase (ATP), found in Haemophilus influenzae (strain PittGG).